The chain runs to 247 residues: Ribosomal RNA large subunit methyltransferase E (247 aa).

The tract at residues 1-21 (MKKTTKKTAGGYGGSGSHKLY) is disordered. S-adenosyl-L-methionine-binding residues include Gly88, Trp90, Asp111, Asp127, and Asp151. Lys191 acts as the Proton acceptor in catalysis.

It belongs to the class I-like SAM-binding methyltransferase superfamily. RNA methyltransferase RlmE family.

The protein localises to the cytoplasm. The enzyme catalyses uridine(2552) in 23S rRNA + S-adenosyl-L-methionine = 2'-O-methyluridine(2552) in 23S rRNA + S-adenosyl-L-homocysteine + H(+). Functionally, specifically methylates the uridine in position 2552 of 23S rRNA at the 2'-O position of the ribose in the fully assembled 50S ribosomal subunit. This is Ribosomal RNA large subunit methyltransferase E from Bartonella henselae (strain ATCC 49882 / DSM 28221 / CCUG 30454 / Houston 1) (Rochalimaea henselae).